The following is a 103-amino-acid chain: Large ribosomal subunit protein bL25 (103 aa).

This sequence belongs to the bacterial ribosomal protein bL25 family. As to quaternary structure, part of the 50S ribosomal subunit; part of the 5S rRNA/L5/L18/L25 subcomplex. Contacts the 5S rRNA. Binds to the 5S rRNA independently of L5 and L18.

Its function is as follows. This is one of the proteins that binds to the 5S RNA in the ribosome where it forms part of the central protuberance. This Blochmanniella floridana protein is Large ribosomal subunit protein bL25.